The primary structure comprises 356 residues: tRNA N6-adenosine threonylcarbamoyltransferase (356 aa).

Histidine 115 and histidine 119 together coordinate Fe cation. Substrate is bound by residues 137-141 (LVSGG), aspartate 170, glycine 183, and asparagine 280. Residue aspartate 308 coordinates Fe cation.

Belongs to the KAE1 / TsaD family. Fe(2+) is required as a cofactor.

It is found in the cytoplasm. It catalyses the reaction L-threonylcarbamoyladenylate + adenosine(37) in tRNA = N(6)-L-threonylcarbamoyladenosine(37) in tRNA + AMP + H(+). Its function is as follows. Required for the formation of a threonylcarbamoyl group on adenosine at position 37 (t(6)A37) in tRNAs that read codons beginning with adenine. Is involved in the transfer of the threonylcarbamoyl moiety of threonylcarbamoyl-AMP (TC-AMP) to the N6 group of A37, together with TsaE and TsaB. TsaD likely plays a direct catalytic role in this reaction. This is tRNA N6-adenosine threonylcarbamoyltransferase from Paracoccus denitrificans (strain Pd 1222).